We begin with the raw amino-acid sequence, 466 residues long: Zinc finger protein NUTCRACKER (466 aa).

Polar residues predominate over residues 1 to 23 (MTSEVLQTISSGSGFAQPQSSST). The interval 1–29 (MTSEVLQTISSGSGFAQPQSSSTLDHDES) is disordered. The residue at position 56 (serine 56) is a Phosphoserine. The C2H2-type 1 zinc finger occupies 66–88 (FLCEVCGKGFQRDQNLQLHRRGH). Threonine 98 carries the phosphothreonine; by KIN10 modification. A C2H2-type 2 zinc finger spans residues 107–137 (YVCPEKTCVHHHSSRALGDLTGIKKHFCRKH). Residues 134 to 141 (CRKHGEKK) carry the Nuclear localization signal motif. A C2H2-type 2; degenerate zinc finger spans residues 142–165 (WTCEKCAKRYAVQSDWKAHSKTCG). Zn(2+) contacts are provided by cysteine 144, cysteine 147, histidine 160, cysteine 164, cysteine 171, and cysteine 173. The CCHC-type 2; atypical zinc finger occupies 169-192 (YRCDCGTIFSRRDSFITHRAFCDA). Serine 178 and serine 182 each carry phosphoserine; by KIN10. The interval 179-191 (RRDSFITHRAFCD) is SHR-binding. Zn(2+) is bound by residues histidine 186 and cysteine 190.

In terms of assembly, interacts with AKIN10. Post-translationally, inhibition of transcription factor activity by KIN10-mediated phosphorylation at Thr-98, Ser-178 and Ser-182 under sugar deprivation conditions, thus delaying flowering. In terms of tissue distribution, highly expressed in vegetative organs and at lower levels in flowers and siliques. Expressed predominantly in roots. In roots, present in cortex, endodermis, and pericycle layer.

It localises to the nucleus. Functionally, transcription activator that binds to the DNA sequence 5'-CTTTTGTCC-3'. Regulates photoperiodic flowering by modulating sugar transport and metabolism. Regulates SUS1 and SUS4. Transcription factor that regulates tissue boundaries and asymmetric cell division. Contributes to the sequestration of 'SHORT-ROOT' to the nucleus. This chain is Zinc finger protein NUTCRACKER, found in Arabidopsis thaliana (Mouse-ear cress).